The following is a 315-amino-acid chain: 7,8-didemethyl-8-hydroxy-5-deazariboflavin synthase (315 aa).

Residues 6–237 (ITYSPAFTLV…EDITIQIPAN (232 aa)) form the Radical SAM core domain. Residues C20, C24, and C27 each coordinate [4Fe-4S] cluster.

Belongs to the radical SAM superfamily. CofG family. As to quaternary structure, consists of two subunits, CofG and CofH. Requires [4Fe-4S] cluster as cofactor.

It catalyses the reaction 5-amino-5-(4-hydroxybenzyl)-6-(D-ribitylimino)-5,6-dihydrouracil + S-adenosyl-L-methionine = 7,8-didemethyl-8-hydroxy-5-deazariboflavin + 5'-deoxyadenosine + L-methionine + NH4(+) + H(+). It participates in cofactor biosynthesis; coenzyme F0 biosynthesis. Functionally, catalyzes the radical-mediated synthesis of 7,8-didemethyl-8-hydroxy-5-deazariboflavin from 5-amino-5-(4-hydroxybenzyl)-6-(D-ribitylimino)-5,6-dihydrouracil. The chain is 7,8-didemethyl-8-hydroxy-5-deazariboflavin synthase from Thermosynechococcus vestitus (strain NIES-2133 / IAM M-273 / BP-1).